Reading from the N-terminus, the 126-residue chain is MIGLKGILKVIDNSGATLAECIRVVRAGKFASLGDEVVVVVKKARSGSSVTAANKVKRGDIHHAIIVRTKSPVRRPDGRYVRFDDNACVLVNKECEPLGTRILSVVANELRTKHHTKIASLAPRTI.

The protein belongs to the universal ribosomal protein uL14 family. In terms of assembly, component of the mitochondrial large ribosomal subunit (mt-LSU). Mature yeast 74S mitochondrial ribosomes consist of a small (37S) and a large (54S) subunit. The 37S small subunit contains a 15S ribosomal RNA (15S mt-rRNA) and at least 32 different proteins. The 54S large subunit contains a 21S rRNA (21S mt-rRNA) and at least 45 different proteins.

The protein resides in the mitochondrion. Its function is as follows. Component of the mitochondrial ribosome (mitoribosome), a dedicated translation machinery responsible for the synthesis of mitochondrial genome-encoded proteins, including at least some of the essential transmembrane subunits of the mitochondrial respiratory chain. The mitoribosomes are attached to the mitochondrial inner membrane and translation products are cotranslationally integrated into the membrane. This chain is Large ribosomal subunit protein uL14m (mrpl38), found in Schizosaccharomyces pombe (strain 972 / ATCC 24843) (Fission yeast).